The sequence spans 2226 residues: Rotatin (2226 aa).

The disordered stretch occupies residues 295–345 (ARGTHHSQNPSPGSSSPRPSVVGRTGQRPRGDGQDWDAASSSGSSSHAHVN). Composition is skewed to low complexity over residues 304–318 (PSPGSSSPRPSVVGR) and 332–343 (AASSSGSSSHAH). At serine 310 the chain carries Phosphoserine. Lysine 811 is modified (N6-acetyllysine). Residues 1534-1554 (SRTSQDRDPSSLSTSETTVAP) are disordered. Polar residues predominate over residues 1543 to 1554 (SSLSTSETTVAP).

The protein belongs to the rotatin family. Interacts with PPP1R35; this interaction allows the mutual recruitment to the centriole.

The protein localises to the cytoplasm. The protein resides in the cytoskeleton. It is found in the cilium basal body. Its subcellular location is the microtubule organizing center. It localises to the centrosome. Involved in the genetic cascade that governs left-right specification. Plays a role in the maintenance of a normal ciliary structure. Required for correct asymmetric expression of NODAL, LEFTY and PITX2. In Homo sapiens (Human), this protein is Rotatin.